Reading from the N-terminus, the 1009-residue chain is Adhesion G-protein coupled receptor G2 (1009 aa).

The first 37 residues, 1–37, serve as a signal peptide directing secretion; the sequence is MLFSGGQYSPVGRPEEVLLIYKIFLVIICFHVILVTS. The Extracellular segment spans residues 38–617; that stretch reads LKENGNSSLL…SRTSLPPSQM (580 aa). 10 N-linked (GlcNAc...) asparagine glycosylation sites follow: asparagine 43, asparagine 77, asparagine 91, asparagine 103, asparagine 109, asparagine 127, asparagine 136, asparagine 154, asparagine 178, and asparagine 186. Disordered stretches follow at residues 279 to 305 and 325 to 346; these read MTPSTPSLTQESNLPSPQPTIPLASSP and SHTLSPVQSSIPSPTTPAPSVP. Over residues 280–293 the composition is skewed to polar residues; it reads TPSTPSLTQESNLP. N-linked (GlcNAc...) asparagine glycans are attached at residues asparagine 362, asparagine 427, asparagine 448, asparagine 453, asparagine 520, asparagine 534, asparagine 539, asparagine 543, and asparagine 589. The GAIN-B domain maps to 453 to 611; the sequence is NTTTFAAQDP…GILLDLSRTS (159 aa). Intrachain disulfides connect cysteine 562–cysteine 593 and cysteine 581–cysteine 595. The interval 562–611 is GPS; the sequence is CVFWDLGRNGGKGGWSSDGCSVKDKRMNETICTCSHLTSFGILLDLSRTS. A stachel region spans residues 600 to 611; it reads SFGILLDLSRTS. The helical transmembrane segment at 618 to 640 threads the bilayer; it reads MALTFITYIGCGLSSIFLSVTLV. Over 641–655 the chain is Cytoplasmic; sequence TYIAFEKIRRDYPSK. The helical transmembrane segment at 656 to 679 threads the bilayer; the sequence is ILIQLCAALLLLNLIFLLDSWIAL. The Extracellular segment spans residues 680–683; the sequence is YNTR. The chain crosses the membrane as a helical span at residues 684 to 709; it reads GFCIAVAVFLHYFLLVSFTWMGLEAF. A disulfide bond links cysteine 686 and cysteine 770. Over 710–728 the chain is Cytoplasmic; sequence HMYLALVKVFNTYIRKYIL. Residues 729 to 751 traverse the membrane as a helical segment; it reads KFCIVGWGIPAVVVSIVLTISPD. Over 752–776 the chain is Extracellular; sequence NYGIGSYGKFPNGTPDDFCWINSNV. Residues 777–802 traverse the membrane as a helical segment; the sequence is VFYITVVGYFCVIFLLNVSMFIVVLV. Residues 803-823 are Cytoplasmic-facing; the sequence is QLCRIKKKKQLGAQRKTSIQD. The chain crosses the membrane as a helical span at residues 824 to 845; it reads LRSIAGLTFLLGITWGFAFFAW. Topologically, residues 846-850 are extracellular; it reads GPVNV. A glycan (N-linked (GlcNAc...) asparagine) is linked at asparagine 849. Residues 851–872 form a helical membrane-spanning segment; sequence TFMYLFAIFNTLQGFFIFIFYC. Asparagine 860 provides a ligand contact to 3beta-hydroxyandrost-5-en-17-one. The Cytoplasmic segment spans residues 873–1009; that stretch reads AAKENVRKQW…RGSLHFIEQM (137 aa). A Phosphoserine modification is found at serine 1002.

This sequence belongs to the G-protein coupled receptor 2 family. Adhesion G-protein coupled receptor (ADGR) subfamily. As to quaternary structure, heterodimer of 2 chains generated by proteolytic processing; the large extracellular N-terminal fragment and the membrane-bound C-terminal fragment predominantly remain associated and non-covalently linked. Interacts with CFTR. In terms of processing, proteolytically cleaved into 2 subunits, an extracellular subunit and a seven-transmembrane subunit. Post-translationally, highly glycosylated. Epididymis-specific expression (at protein level). Associated with apical membranes of efferent ductule and proximal epididymal duct epithelia. Mainly expressed in the nonciliated principal cells of the proximal excurrent ducts.

Its subcellular location is the apical cell membrane. Forms a heterodimer of 2 chains generated by proteolytic processing that remain associated through non-covalent interactions mediated by the GAIN-B domain. In the inactivated receptor, the Stachel sequence (also named stalk) is embedded in the GAIN-B domain, where it adopts a beta-strand conformation. On activation, the Stachel moves into the 7 transmembrane region and adopts a twisted hook-shaped configuration that forms contacts within the receptor, leading to coupling of a G-alpha protein, which activates signaling. The cleaved GAIN-B and N-terminal domains can then dissociate from the rest of the receptor. Deoxycorticosterone (DOC) acts as an antagonist of ADGRG2. In terms of biological role, adhesion G-protein coupled receptor (aGPCR) for steroid hormones, such as dehydroepiandrosterone (DHEA; also named 3beta-hydroxyandrost-5-en-17-one) and androstenedione. Involved in a signal transduction pathway controlling epididymal function and male fertility. Ligand binding causes a conformation change that triggers signaling via guanine nucleotide-binding proteins (G proteins) and modulates the activity of downstream effectors, such as adenylate cyclase. ADGRG2 is coupled to G(s) G proteins and mediates activation of adenylate cyclase activity. Also able to couple with G(q) G proteins in vitro. May regulate fluid exchange within epididymis. The chain is Adhesion G-protein coupled receptor G2 from Mus musculus (Mouse).